We begin with the raw amino-acid sequence, 190 residues long: dCTP deaminase (190 aa).

Lysine 113–arginine 118 provides a ligand contact to dCTP. The Proton donor/acceptor role is filled by glutamate 139. 4 residues coordinate dCTP: glutamine 158, tyrosine 172, lysine 181, and glutamine 182.

Belongs to the dCTP deaminase family. Homotrimer.

The catalysed reaction is dCTP + H2O + H(+) = dUTP + NH4(+). The protein operates within pyrimidine metabolism; dUMP biosynthesis; dUMP from dCTP (dUTP route): step 1/2. Catalyzes the deamination of dCTP to dUTP. This chain is dCTP deaminase, found in Chlamydia trachomatis serovar L2 (strain ATCC VR-902B / DSM 19102 / 434/Bu).